Consider the following 230-residue polypeptide: 3,4-dihydroxy-2-butanone 4-phosphate synthase (230 aa).

D-ribulose 5-phosphate-binding positions include 38-39, aspartate 43, 151-155, and glutamate 175; these read RE and RRGHT. Mg(2+) is bound at residue glutamate 39. Histidine 154 contacts Mg(2+).

Belongs to the DHBP synthase family. As to quaternary structure, homodimer. It depends on Mg(2+) as a cofactor. The cofactor is Mn(2+).

It carries out the reaction D-ribulose 5-phosphate = (2S)-2-hydroxy-3-oxobutyl phosphate + formate + H(+). It participates in cofactor biosynthesis; riboflavin biosynthesis; 2-hydroxy-3-oxobutyl phosphate from D-ribulose 5-phosphate: step 1/1. Catalyzes the conversion of D-ribulose 5-phosphate to formate and 3,4-dihydroxy-2-butanone 4-phosphate. This Vibrio harveyi (Beneckea harveyi) protein is 3,4-dihydroxy-2-butanone 4-phosphate synthase.